Here is a 264-residue protein sequence, read N- to C-terminus: NADH dehydrogenase [ubiquinone] iron-sulfur protein 3, mitochondrial (264 aa).

A mitochondrion-targeting transit peptide spans 1–36; that stretch reads MAAAAVARLWWRGILGASALTRGTGRPSVLLLPVRR.

The protein belongs to the complex I 30 kDa subunit family. In terms of assembly, core subunit of respiratory chain NADH dehydrogenase (Complex I) which is composed of 45 different subunits. Interacts with NDUFAF3. Interacts with RAB5IF. Found in subcomplexes containing subunits NDUFS2, MT-ND1 and NDUFA13.

The protein resides in the mitochondrion inner membrane. It catalyses the reaction a ubiquinone + NADH + 5 H(+)(in) = a ubiquinol + NAD(+) + 4 H(+)(out). In terms of biological role, core subunit of the mitochondrial membrane respiratory chain NADH dehydrogenase (Complex I) which catalyzes electron transfer from NADH through the respiratory chain, using ubiquinone as an electron acceptor. Essential for the catalytic activity and assembly of complex I. The sequence is that of NADH dehydrogenase [ubiquinone] iron-sulfur protein 3, mitochondrial (NDUFS3) from Pan troglodytes (Chimpanzee).